The chain runs to 223 residues: Peptidyl-tRNA hydrolase (223 aa).

Residue tyrosine 14 coordinates tRNA. Histidine 19 (proton acceptor) is an active-site residue. Tyrosine 64, asparagine 66, and asparagine 112 together coordinate tRNA. Positions 183 to 223 (MNVRNTRPKPGKRQKGEGDGSTDPAPAAKEGKGPLPPTQKP) are disordered.

It belongs to the PTH family. As to quaternary structure, monomer.

It localises to the cytoplasm. It carries out the reaction an N-acyl-L-alpha-aminoacyl-tRNA + H2O = an N-acyl-L-amino acid + a tRNA + H(+). In terms of biological role, hydrolyzes ribosome-free peptidyl-tRNAs (with 1 or more amino acids incorporated), which drop off the ribosome during protein synthesis, or as a result of ribosome stalling. Functionally, catalyzes the release of premature peptidyl moieties from peptidyl-tRNA molecules trapped in stalled 50S ribosomal subunits, and thus maintains levels of free tRNAs and 50S ribosomes. The polypeptide is Peptidyl-tRNA hydrolase (Sorangium cellulosum (strain So ce56) (Polyangium cellulosum (strain So ce56))).